The primary structure comprises 343 residues: MLNQRIHPGMLVLLMFLYHFMEDHTAQAGNCWLRQARNGRCQVLYKTDLSKEECCKSGRLTTSWTEEDVNDNTLFKWMIFNGGAPNCIPCKETCENVDCGPGKKCKMNKKNKPRCVCAPDCSNITWKGPVCGLDGKTYRNECALLKARCKEQPELEVQYQGKCKKTCRDVLCPGSSTCVVDQTNNAYCVTCNRICPEPTSPEQYLCGNDGITYASACHLRKATCLLGRSIGLAYEGKCIKAKSCEDIQCSAGKKCLWDFKVGRGRCALCDELCPESKSDEAVCASDNTTYPSECAMKEAACSMGVLLEVKHSGSCNSINEDPEEEEEDEDQDYSFPISSILEW.

An N-terminal signal peptide occupies residues methionine 1–alanine 28. Residues glycine 29 to glycine 102 enclose the TB domain. 8 cysteine pairs are disulfide-bonded: cysteine 31/cysteine 54, cysteine 41/cysteine 87, cysteine 55/cysteine 90, cysteine 94/cysteine 105, cysteine 99/cysteine 115, cysteine 117/cysteine 149, cysteine 121/cysteine 142, and cysteine 131/cysteine 163. In terms of domain architecture, Follistatin-like 1 spans threonine 93 to valine 116. 3 Kazal-like domains span residues cysteine 99–lysine 165, asparagine 185–lysine 240, and arginine 263–serine 317. N-linked (GlcNAc...) asparagine glycosylation is present at asparagine 123. Positions threonine 166–valine 189 constitute a Follistatin-like 2 domain. 3 disulfides stabilise this stretch: cysteine 191/cysteine 224, cysteine 195/cysteine 217, and cysteine 206/cysteine 238. One can recognise a Follistatin-like 3 domain in the interval serine 243–alanine 267. 3 cysteine pairs are disulfide-bonded: cysteine 269-cysteine 301, cysteine 273-cysteine 294, and cysteine 283-cysteine 315. The N-linked (GlcNAc...) asparagine glycan is linked to asparagine 287. Residues cysteine 315–tryptophan 343 form a disordered region. The span at glutamate 320–aspartate 332 shows a compositional bias: acidic residues.

Monomer. As to expression, ciliary ganglion neurons. Levels are higher in the iris than the choroid.

It localises to the secreted. Its function is as follows. Binds directly to activin and functions as an activin antagonist. Inhibits activin A signaling in the iris and regulates somatostatin phenotype in ciliary ganglion neurons. Specific inhibitor of the biosynthesis and secretion of pituitary follicle stimulating hormone (FSH). The polypeptide is Follistatin (FST) (Gallus gallus (Chicken)).